A 171-amino-acid polypeptide reads, in one-letter code: Lipoprotein signal peptidase (171 aa).

3 helical membrane passes run 7–27 (GLLALVLTLILDQATKLGLYF), 64–84 (IGRWLLVALSLAAAIGLGLWM), and 88–108 (TSRLLGIALGLIVGGALGNAI). Active-site residues include Asp-118 and Asp-136. A helical membrane pass occupies residues 128-148 (SWYVFNVADAAIVAGVIGLIL).

The protein belongs to the peptidase A8 family.

Its subcellular location is the cell inner membrane. It carries out the reaction Release of signal peptides from bacterial membrane prolipoproteins. Hydrolyzes -Xaa-Yaa-Zaa-|-(S,diacylglyceryl)Cys-, in which Xaa is hydrophobic (preferably Leu), and Yaa (Ala or Ser) and Zaa (Gly or Ala) have small, neutral side chains.. The protein operates within protein modification; lipoprotein biosynthesis (signal peptide cleavage). In terms of biological role, this protein specifically catalyzes the removal of signal peptides from prolipoproteins. This Methylobacterium radiotolerans (strain ATCC 27329 / DSM 1819 / JCM 2831 / NBRC 15690 / NCIMB 10815 / 0-1) protein is Lipoprotein signal peptidase.